A 344-amino-acid polypeptide reads, in one-letter code: RNA 3'-terminal phosphate cyclase (344 aa).

ATP-binding positions include Gln103 and His283–Gln287. His308 acts as the Tele-AMP-histidine intermediate in catalysis.

It belongs to the RNA 3'-terminal cyclase family. Type 1 subfamily.

The protein resides in the cytoplasm. The catalysed reaction is a 3'-end 3'-phospho-ribonucleotide-RNA + ATP = a 3'-end 2',3'-cyclophospho-ribonucleotide-RNA + AMP + diphosphate. Catalyzes the conversion of 3'-phosphate to a 2',3'-cyclic phosphodiester at the end of RNA. The mechanism of action of the enzyme occurs in 3 steps: (A) adenylation of the enzyme by ATP; (B) transfer of adenylate to an RNA-N3'P to produce RNA-N3'PP5'A; (C) and attack of the adjacent 2'-hydroxyl on the 3'-phosphorus in the diester linkage to produce the cyclic end product. The biological role of this enzyme is unknown but it is likely to function in some aspects of cellular RNA processing. The chain is RNA 3'-terminal phosphate cyclase from Salmonella agona (strain SL483).